The sequence spans 428 residues: C4-dicarboxylate transport protein (428 aa).

Helical transmembrane passes span 8-28 (SLYVQVLTAIAIGILLGHFYP), 44-64 (LIKMVIAPVIFCTVVTGIAGM), 76-96 (VALLYFEVVSTIALIIGLIIV), 142-162 (IGAFASGNILQVLLFAVLFGF), 184-204 (VIFGIINMIMRLAPIGAFGAM), 222-242 (LIICFYITCILFVVVVLGSIA), 289-309 (VVGLVIPTGYSFNLDGTSIYL), 326-346 (IFHQITLLVVLLLSSKGAAGV), and 352-372 (IVLAATISAVGHLPVAGLALI).

Belongs to the dicarboxylate/amino acid:cation symporter (DAACS) (TC 2.A.23) family.

The protein resides in the cell inner membrane. Functionally, responsible for the transport of dicarboxylates such as succinate, fumarate, and malate from the periplasm across the membrane. The sequence is that of C4-dicarboxylate transport protein from Klebsiella pneumoniae (strain 342).